Consider the following 276-residue polypeptide: Elongation factor Ts, mitochondrial (276 aa).

The protein belongs to the EF-Ts family.

It is found in the mitochondrion. In terms of biological role, associates with the EF-Tu.GDP complex and induces the exchange of GDP to GTP. It remains bound to the aminoacyl-tRNA.EF-Tu.GTP complex up to the GTP hydrolysis stage on the ribosome. This chain is Elongation factor Ts, mitochondrial, found in Leishmania infantum.